Consider the following 430-residue polypeptide: Adenylosuccinate synthetase (430 aa).

Residues 12–18 (GDEGKGK) and 40–42 (GHT) each bind GTP. Residue D13 is the Proton acceptor of the active site. Residues D13 and G40 each contribute to the Mg(2+) site. IMP contacts are provided by residues 13-16 (DEGK), 38-41 (NAGH), T130, R144, Q224, T239, and R303. The Proton donor role is filled by H41. 299-305 (TTTGRKR) contributes to the substrate binding site. GTP-binding positions include R305, 331 to 333 (KLD), and 413 to 415 (STS).

It belongs to the adenylosuccinate synthetase family. In terms of assembly, homodimer. The cofactor is Mg(2+).

It localises to the cytoplasm. It carries out the reaction IMP + L-aspartate + GTP = N(6)-(1,2-dicarboxyethyl)-AMP + GDP + phosphate + 2 H(+). Its pathway is purine metabolism; AMP biosynthesis via de novo pathway; AMP from IMP: step 1/2. In terms of biological role, plays an important role in the de novo pathway of purine nucleotide biosynthesis. Catalyzes the first committed step in the biosynthesis of AMP from IMP. This is Adenylosuccinate synthetase from Ruegeria pomeroyi (strain ATCC 700808 / DSM 15171 / DSS-3) (Silicibacter pomeroyi).